A 771-amino-acid polypeptide reads, in one-letter code: DNA polymerase 1 (771 aa).

This sequence belongs to the DNA polymerase type-B family.

The catalysed reaction is DNA(n) + a 2'-deoxyribonucleoside 5'-triphosphate = DNA(n+1) + diphosphate. In Pyrococcus abyssi, this protein is DNA polymerase 1 (polI).